We begin with the raw amino-acid sequence, 315 residues long: Lipoyl synthase (315 aa).

[4Fe-4S] cluster contacts are provided by Cys62, Cys67, Cys73, Cys88, Cys92, Cys95, and Ser302. Residues 73–291 form the Radical SAM core domain; it reads CFGHGTATFM…GELAKKLGFS (219 aa).

It belongs to the radical SAM superfamily. Lipoyl synthase family. It depends on [4Fe-4S] cluster as a cofactor.

It localises to the cytoplasm. The enzyme catalyses [[Fe-S] cluster scaffold protein carrying a second [4Fe-4S](2+) cluster] + N(6)-octanoyl-L-lysyl-[protein] + 2 oxidized [2Fe-2S]-[ferredoxin] + 2 S-adenosyl-L-methionine + 4 H(+) = [[Fe-S] cluster scaffold protein] + N(6)-[(R)-dihydrolipoyl]-L-lysyl-[protein] + 4 Fe(3+) + 2 hydrogen sulfide + 2 5'-deoxyadenosine + 2 L-methionine + 2 reduced [2Fe-2S]-[ferredoxin]. It functions in the pathway protein modification; protein lipoylation via endogenous pathway; protein N(6)-(lipoyl)lysine from octanoyl-[acyl-carrier-protein]: step 2/2. In terms of biological role, catalyzes the radical-mediated insertion of two sulfur atoms into the C-6 and C-8 positions of the octanoyl moiety bound to the lipoyl domains of lipoate-dependent enzymes, thereby converting the octanoylated domains into lipoylated derivatives. This is Lipoyl synthase from Coxiella burnetii (strain CbuG_Q212) (Coxiella burnetii (strain Q212)).